Consider the following 249-residue polypeptide: Probable aquaporin TIP-type (249 aa).

The next 2 helical transmembrane spans lie at 22–42 (AGLA…GSGI) and 56–76 (AGLI…VSVG). The NPA 1 motif lies at 85–87 (NPA). 3 helical membrane-spanning segments follow: residues 103–123 (IVYI…LVFV), 137–157 (VGVG…VYTV), and 169–189 (IGII…LVGG). Residues 197 to 199 (NPA) carry the NPA 2 motif. A helical transmembrane segment spans residues 217–237 (YWAGPLIGGGIAGLVYEVLFI).

The protein belongs to the MIP/aquaporin (TC 1.A.8) family. TIP (TC 1.A.8.10) subfamily. As to expression, expression is highest in root tips, with slightly lower levels of hybridizing mRNA in stems, and whole roots, and much lower levels in nodules and leaves.

Its subcellular location is the membrane. In terms of biological role, aquaporins facilitate the transport of water and small neutral solutes across cell membranes. This chain is Probable aquaporin TIP-type (MCP1), found in Medicago sativa (Alfalfa).